A 91-amino-acid polypeptide reads, in one-letter code: Sm-like protein LSM6A (91 aa).

Positions 14-86 constitute a Sm domain; the sequence is TPADFLKSIR…VLYISTVNMT (73 aa).

The protein belongs to the snRNP Sm proteins family. In terms of assembly, component of the heptameric LSM1-LSM7 complex that forms a seven-membered ring structure with a donut shape. The LSM subunits are arranged in the order LSM1, LSM2, LSM3, LSM6, LSM5, LSM7 and LSM4. Component of the heptameric LSM2-LSM8 complex that forms a seven-membered ring structure with a donut shape. The LSM subunits are arranged in the order LSM8, LSM2, LSM3, LSM6, LSM5, LSM7 and LSM4. LSM6A subunit interacts only with its two neighboring subunits, LSM3A or LSM3B and LSM5. In terms of tissue distribution, expressed in roots, leaves, stems, flowers and siliques.

It localises to the cytoplasm. It is found in the nucleus. Component of LSM protein complexes, which are involved in RNA processing. Component of the cytoplasmic LSM1-LSM7 complex which is involved in mRNA degradation by promoting decapping and leading to accurate 5'-3' mRNA decay. The cytoplasmic LSM1-LSM7 complex regulates developmental gene expression by the decapping of specific development-related transcripts. Component of the nuclear LSM2-LSM8 complex which is involved splicing nuclear mRNAs. LSM2-LSM8 binds directly to the U6 small nuclear RNAs (snRNAs) and is essential for accurate splicing of selected development-related mRNAs through the stabilization of the spliceosomal U6 snRNA. Plays a critical role in the regulation of development-related gene expression. The sequence is that of Sm-like protein LSM6A from Arabidopsis thaliana (Mouse-ear cress).